Reading from the N-terminus, the 772-residue chain is E3 ubiquitin-protein ligase UHRF1 (772 aa).

Residues Met1–Pro77 enclose the Ubiquitin-like domain. The interval Ser90–Ala111 is disordered. Tudor-like regions lie at residues Ser129–Arg205 and Glu212–Pro281. The interval Pro291–Glu299 is linker. Residues Gly297–Asp364 form a PHD-type zinc finger. Histone H3R2me0 binding stretches follow at residues Cys331–Asp335 and Pro351–Asp353. A YDG domain is found at Gly417 to Arg580. A required to promote base flipping region spans residues His443 to Val444. Residues Ala461 to Gly462 and Asp467 each bind DNA. Required for formation of a 5-methylcytosine-binding pocket regions lie at residues Tyr464–Asp467 and Tyr476–Ser479. The span at Ser615–Asp626 shows a compositional bias: basic and acidic residues. Residues Ser615 to Lys649 form a disordered region. Residues Cys703–Arg742 form an RING-type zinc finger.

The protein resides in the nucleus. It catalyses the reaction S-ubiquitinyl-[E2 ubiquitin-conjugating enzyme]-L-cysteine + [acceptor protein]-L-lysine = [E2 ubiquitin-conjugating enzyme]-L-cysteine + N(6)-ubiquitinyl-[acceptor protein]-L-lysine.. It participates in protein modification; protein ubiquitination. Multidomain protein that acts as a key epigenetic regulator by bridging DNA methylation and chromatin modification. Specifically recognizes and binds hemimethylated DNA at replication forks via its YDG domain and recruits dnmt1 methyltransferase to ensure faithful propagation of the DNA methylation patterns through DNA replication. In addition to its role in maintenance of DNA methylation, also plays a key role in chromatin modification: through its tudor-like regions and PHD-type zinc fingers, specifically recognizes and binds histone H3 trimethylated at 'Lys-9' (H3K9me3) and unmethylated at 'Arg-2' (H3R2me0), respectively, and recruits chromatin proteins. Enriched in pericentric heterochromatin where it recruits different chromatin modifiers required for this chromatin replication. Also localizes to euchromatic regions where it negatively regulates transcription possibly by impacting DNA methylation and histone modifications. Has E3 ubiquitin-protein ligase activity by mediating the ubiquitination of target proteins. However, it is still unclear how E3 ubiquitin-protein ligase activity is related to its role in chromatin in vivo. The polypeptide is E3 ubiquitin-protein ligase UHRF1 (uhrf1) (Xenopus laevis (African clawed frog)).